The sequence spans 65 residues: Cell death protein rpr (65 aa).

Interacts with Diap2 (via BIR2 domain).

Functionally, activator of apoptosis, as well as grim and hid, that acts on the effector Dredd. This is Cell death protein rpr (rpr) from Drosophila melanogaster (Fruit fly).